A 139-amino-acid polypeptide reads, in one-letter code: Large ribosomal subunit protein uL22 (139 aa).

The tract at residues 1-21 (MTAPEQTYRNKKQRKQQHKLR) is disordered. Positions 9–21 (RNKKQRKQQHKLR) are enriched in basic residues.

Belongs to the universal ribosomal protein uL22 family. In terms of assembly, part of the 50S ribosomal subunit.

Its function is as follows. This protein binds specifically to 23S rRNA; its binding is stimulated by other ribosomal proteins, e.g. L4, L17, and L20. It is important during the early stages of 50S assembly. It makes multiple contacts with different domains of the 23S rRNA in the assembled 50S subunit and ribosome. Functionally, the globular domain of the protein is located near the polypeptide exit tunnel on the outside of the subunit, while an extended beta-hairpin is found that lines the wall of the exit tunnel in the center of the 70S ribosome. The chain is Large ribosomal subunit protein uL22 from Deinococcus geothermalis (strain DSM 11300 / CIP 105573 / AG-3a).